We begin with the raw amino-acid sequence, 184 residues long: Large ribosomal subunit protein eL18 (184 aa).

Belongs to the eukaryotic ribosomal protein eL18 family.

Its subcellular location is the cytoplasm. The chain is Large ribosomal subunit protein eL18 (RPL18) from Theileria parva (East coast fever infection agent).